A 132-amino-acid chain; its full sequence is Small ribosomal subunit protein uS8 (132 aa).

The protein belongs to the universal ribosomal protein uS8 family. Part of the 30S ribosomal subunit. Contacts proteins S5 and S12.

One of the primary rRNA binding proteins, it binds directly to 16S rRNA central domain where it helps coordinate assembly of the platform of the 30S subunit. This Thermoanaerobacter pseudethanolicus (strain ATCC 33223 / 39E) (Clostridium thermohydrosulfuricum) protein is Small ribosomal subunit protein uS8.